The sequence spans 689 residues: Glycine--tRNA ligase beta subunit (689 aa).

Belongs to the class-II aminoacyl-tRNA synthetase family. As to quaternary structure, tetramer of two alpha and two beta subunits.

It localises to the cytoplasm. It catalyses the reaction tRNA(Gly) + glycine + ATP = glycyl-tRNA(Gly) + AMP + diphosphate. The protein is Glycine--tRNA ligase beta subunit of Yersinia enterocolitica serotype O:8 / biotype 1B (strain NCTC 13174 / 8081).